The primary structure comprises 209 residues: Chaperone protein TorD (209 aa).

Belongs to the TorD/DmsD family. TorD subfamily.

The protein localises to the cytoplasm. Functionally, involved in the biogenesis of TorA. Acts on TorA before the insertion of the molybdenum cofactor and, as a result, probably favors a conformation of the apoenzyme that is competent for acquiring the cofactor. The sequence is that of Chaperone protein TorD from Shewanella baltica (strain OS185).